We begin with the raw amino-acid sequence, 465 residues long: D-ornithine/D-lysine decarboxylase (465 aa).

K80 carries the post-translational modification N6-(pyridoxal phosphate)lysine. Residues G259 and 307–310 (EPGR) contribute to the pyridoxal 5'-phosphate site. C387 functions as the Proton donor in the catalytic mechanism. Residue Y422 participates in pyridoxal 5'-phosphate binding.

It belongs to the Orn/Lys/Arg decarboxylase class-II family. Homodimer. Pyridoxal 5'-phosphate serves as cofactor.

It carries out the reaction D-ornithine + H(+) = putrescine + CO2. The enzyme catalyses D-lysine + H(+) = cadaverine + CO2. Functionally, catalyzes the decarboxylation of D-ornithine and D-lysine. Ornithine is likely the physiological substrate. Has no detectable diaminopimelate decarboxylase activity in vitro. The chain is D-ornithine/D-lysine decarboxylase from Salmonella typhimurium (strain LT2 / SGSC1412 / ATCC 700720).